The chain runs to 61 residues: Large ribosomal subunit protein uL30 (61 aa).

The protein belongs to the universal ribosomal protein uL30 family. As to quaternary structure, part of the 50S ribosomal subunit.

In Francisella tularensis subsp. tularensis (strain FSC 198), this protein is Large ribosomal subunit protein uL30.